We begin with the raw amino-acid sequence, 525 residues long: Keratin, type II cytoskeletal 71 (525 aa).

Residues 1 to 131 (MSRQFTCKSG…DPEIQKVRAQ (131 aa)) are head. The interval 132–167 (EREQIKALNNKFASFIDKVRFLEQQNQVLETKWELL) is coil 1A. An IF rod domain is found at 132-445 (EREQIKALNN…KLLESEECRM (314 aa)). The tract at residues 168-186 (QQLDLNNCKNNLEPILEGY) is linker 1. The tract at residues 187–278 (ISNLRKQLET…CLYEAEIAQI (92 aa)) is coil 1B. Residues 279–302 (QSHISDMSVILSMDNNRDLNLDSI) form a linker 12 region. The interval 303-441 (IDEVRAQYED…ATYRKLLESE (139 aa)) is coil 2. The interval 442 to 525 (ECRMSGEFPS…LSAPSKKASR (84 aa)) is tail. The segment at 492-525 (VRGGESRSRSSTTDYKDALGKGSSLSAPSKKASR) is disordered. A compositionally biased stretch (basic and acidic residues) spans 495-510 (GESRSRSSTTDYKDAL).

The protein belongs to the intermediate filament family. Heterodimer of a type I and a type II keratin. Associates with KRT16 and/or KRT17.

The protein resides in the cytoplasm. It localises to the cytoskeleton. Functionally, plays a central role in hair formation. Essential component of keratin intermediate filaments in the inner root sheath (IRS) of the hair follicle. This is Keratin, type II cytoskeletal 71 (KRT71) from Bos taurus (Bovine).